Here is a 266-residue protein sequence, read N- to C-terminus: Translation initiation factor 2 subunit alpha (266 aa).

Residues 10–81 enclose the S1 motif domain; that stretch reads GELVVGKIDE…SAQQIDLSIK (72 aa). The disordered stretch occupies residues 233–266; the sequence is AEDALEESADRAAKVVEQHGGSGQFHRERSEDDE. Basic and acidic residues-rich tracts occupy residues 240–249 and 257–266; these read SADRAAKVVE and FHRERSEDDE.

The protein belongs to the eIF-2-alpha family. In terms of assembly, heterotrimer composed of an alpha, a beta and a gamma chain.

Its function is as follows. eIF-2 functions in the early steps of protein synthesis by forming a ternary complex with GTP and initiator tRNA. This chain is Translation initiation factor 2 subunit alpha, found in Haloarcula marismortui (strain ATCC 43049 / DSM 3752 / JCM 8966 / VKM B-1809) (Halobacterium marismortui).